Reading from the N-terminus, the 871-residue chain is uncharacterized protein (871 aa).

11 helical membrane-spanning segments follow: residues Ala-11–Leu-31, Tyr-92–Leu-112, Phe-139–Arg-159, Thr-380–Ser-400, Leu-422–Val-442, Val-475–Ile-495, Phe-520–Leu-540, Leu-562–Ile-582, Ile-586–Tyr-606, Leu-629–Leu-649, and Trp-653–Phe-673. Ser-725, Ser-726, Ser-727, Ser-729, Ser-737, and Ser-761 each carry phosphoserine. Polar residues predominate over residues Ser-727–Ser-740. A disordered region spans residues Ser-727–Lys-746.

Belongs to the CSC1 (TC 1.A.17) family.

It localises to the golgi apparatus membrane. Functionally, acts as an osmosensitive calcium-permeable cation channel. This is an uncharacterized protein from Schizosaccharomyces pombe (strain 972 / ATCC 24843) (Fission yeast).